The primary structure comprises 82 residues: Chaplin-E (82 aa).

The signal sequence occupies residues 1–27; the sequence is MKNLKKAAAVTMVAGGLIAAGAGMASA. In terms of domain architecture, Chaplin spans 41 to 81; sequence SPGVASGNLVQAPIHIPVNAVGNSVNVIGVLNPAFGNLGVN.

Belongs to the chaplin family. Short chaplin subfamily.

It localises to the cell surface. It is found in the secreted. The protein localises to the cell wall. Its subcellular location is the fimbrium. In terms of biological role, one of 8 partially redundant surface-active proteins required for efficient formation of aerial mycelium; the short chaplins assemble into a hydrophobic, amyloidal fibrillar surface layer that envelopes and protects aerial hyphae and spores, presumably anchored to the long chaplins. Chaplins have an overlapping function with the surface-active SapB peptide; chaplins are essential on minimal medium while on rich medium both chaplins and SapB are required for efficient aerial hyphae formation. Chaplins are also involved in cell attachment to a hydrophobic surface. Forms amyloid fibrils in vitro probably composed of stacked beta-sheets, at low extracellular concentrations individually restores the ability to form aerial hyphae to a chaplin-deficient strain, but does so less well than other short chaplins. A small chaplin extract (ChpD, ChpE, ChpF, ChpG and ChpH) self-assembles into 2 different amyloids; small fibrils at the air-water interface form an amphipathic membrane that resembles spore-surface structures involved in aerial hyphae formation, and hydrophilic fibrils in solution that resemble the fibers that attach cells to a hydrophobic surface. At the air-water interface the hydrophilic surface is in contact with water (probably equivalent to the peptidoglycan layer), while the hydrophobic face is exposed to the air, making the surface of the aerial hyphae hydrophobic. A minimal chaplin strain capable of forming aerial mycelium/hyphae on minimal medium contains ChpC, ChpE and ChpH. The strain also has restored rodlet formation on the hyphae surface. A second strain with ChpA, ChpD and ChpE makes slightly less robust hyphae. This essential chaplin may coordinate the assembly and/or polymerization of the other chaplins. A small chaplin extract applied to a chaplin-deficient strain restores aerial hyphae formation. The small chaplin extract forms an amyloid-like structure similar to that seen on the surface of cells without rodlets (rdlA-rdlB deletions), and is highly surface active, reducing surface tension from 72 to 26 mJ/m(2), which probably allows escape of hyphae from an aqueous environment into air. In Streptomyces coelicolor (strain ATCC BAA-471 / A3(2) / M145), this protein is Chaplin-E.